The primary structure comprises 222 residues: MAPLKLYGMPLSPNVVRVATVLNEKGLDFEIVPVDLTTGAHKQPDFLALNPFGQIPALVDGDEVLFESRAINRYIASKYASEGTDLLPATASAAKLEVWLEVESHHFHPNASPLVFQLLVRPLLGGAPDAAVVEKHAEQLAKVLDVYEAHLARNKYLAGDEFTLADANHALLPALTSARPPRPGCVAARPHVKAWWEAIAARPAFQKTVAAIPLPPPPSSSA.

Residues 2 to 83 form the GST N-terminal domain; sequence APLKLYGMPL…YIASKYASEG (82 aa). Residues S12, 13–14, 41–42, 54–55, and 67–68 each bind glutathione; these read PN, HK, QI, and ES. The region spanning 89–219 is the GST C-terminal domain; sequence ATASAAKLEV…AAIPLPPPPS (131 aa).

It belongs to the GST superfamily. Phi family. Homodimer.

The enzyme catalyses RX + glutathione = an S-substituted glutathione + a halide anion + H(+). Conjugation of reduced glutathione to a wide number of exogenous and endogenous hydrophobic electrophiles. Involved in the detoxification of certain herbicides. The chain is Glutathione S-transferase 3 from Zea mays (Maize).